The following is a 446-amino-acid chain: Signal recognition particle 54 kDa protein (446 aa).

Residues G103 to T110, D185 to R189, and T245 to D248 contribute to the GTP site.

This sequence belongs to the GTP-binding SRP family. SRP54 subfamily. In terms of assembly, part of the signal recognition particle protein translocation system, which is composed of SRP and FtsY. Archaeal SRP consists of a 7S RNA molecule of 300 nucleotides and two protein subunits: SRP54 and SRP19.

The protein resides in the cytoplasm. The catalysed reaction is GTP + H2O = GDP + phosphate + H(+). In terms of biological role, involved in targeting and insertion of nascent membrane proteins into the cytoplasmic membrane. Binds to the hydrophobic signal sequence of the ribosome-nascent chain (RNC) as it emerges from the ribosomes. The SRP-RNC complex is then targeted to the cytoplasmic membrane where it interacts with the SRP receptor FtsY. This chain is Signal recognition particle 54 kDa protein, found in Metallosphaera sedula (strain ATCC 51363 / DSM 5348 / JCM 9185 / NBRC 15509 / TH2).